Reading from the N-terminus, the 186-residue chain is Enhancer of split m7 protein (186 aa).

The bHLH domain maps to 13 to 68; the sequence is YRKVMKPLLERKRRARINKCLDELKDLMAECVAQTGDAKFEKADILEVTVQHLRKL. The 34-residue stretch at 83-116 folds into the Orange domain; that stretch reads FRAGYIRAANEVSRALASLPRVDVAFGTTLMTHL. A WRPW motif motif is present at residues 183 to 186; sequence WRPW.

As to quaternary structure, transcription repression requires formation of a complex with a corepressor protein (Groucho). Forms homodimers.

It is found in the nucleus. Functionally, participates in the control of cell fate choice by uncommitted neuroectodermal cells in the embryo. Transcriptional repressor. Binds DNA on N-box motifs: 5'-CACNAG-3'. This chain is Enhancer of split m7 protein, found in Drosophila melanogaster (Fruit fly).